The sequence spans 434 residues: Enolase (434 aa).

Gln-167 provides a ligand contact to (2R)-2-phosphoglycerate. Catalysis depends on Glu-209, which acts as the Proton donor. The Mg(2+) site is built by Asp-246, Glu-291, and Asp-318. The (2R)-2-phosphoglycerate site is built by Lys-343, Arg-372, Ser-373, and Lys-394. Lys-343 functions as the Proton acceptor in the catalytic mechanism.

It belongs to the enolase family. Component of the RNA degradosome, a multiprotein complex involved in RNA processing and mRNA degradation. It depends on Mg(2+) as a cofactor.

The protein resides in the cytoplasm. The protein localises to the secreted. It localises to the cell surface. The enzyme catalyses (2R)-2-phosphoglycerate = phosphoenolpyruvate + H2O. The protein operates within carbohydrate degradation; glycolysis; pyruvate from D-glyceraldehyde 3-phosphate: step 4/5. In terms of biological role, catalyzes the reversible conversion of 2-phosphoglycerate (2-PG) into phosphoenolpyruvate (PEP). It is essential for the degradation of carbohydrates via glycolysis. The polypeptide is Enolase (Buchnera aphidicola subsp. Schizaphis graminum (strain Sg)).